The sequence spans 370 residues: mRNA cap guanine-N(7) methyltransferase 1 (370 aa).

The span at 1–11 (MKRGFSDSPSS) shows a compositional bias: low complexity. A disordered region spans residues 1–34 (MKRGFSDSPSSSAPPPSSRFKSNPEGDSQFLEDE). The region spanning 61–341 (SPIIHLKKLN…LYLSFVLRKR (281 aa)) is the mRNA cap 0 methyltransferase domain. Position 70-71 (70-71 (NN)) interacts with mRNA. Residues Lys74, Ala92, Asp114, 150–151 (DC), and 172–174 (QFA) contribute to the S-adenosyl-L-methionine site.

The protein belongs to the class I-like SAM-binding methyltransferase superfamily. mRNA cap 0 methyltransferase family.

The protein localises to the nucleus. It catalyses the reaction a 5'-end (5'-triphosphoguanosine)-ribonucleoside in mRNA + S-adenosyl-L-methionine = a 5'-end (N(7)-methyl 5'-triphosphoguanosine)-ribonucleoside in mRNA + S-adenosyl-L-homocysteine. Functionally, mRNA-capping methyltransferase that methylates the N7 position of the added guanosine to the 5'-cap structure of mRNAs. Binds RNA containing 5'-terminal GpppC. The chain is mRNA cap guanine-N(7) methyltransferase 1 from Arabidopsis thaliana (Mouse-ear cress).